The chain runs to 157 residues: Cysteine protease Nivulian-2 (157 aa).

This sequence belongs to the intron maturase 2 family. MatK subfamily. As to quaternary structure, monomer. Glycosylated. In terms of tissue distribution, accumulates in latex (at protein level).

Inhibited by HgCl(2), iodoacetamide (IAA) and, to a far lesser extent, by SDS, hydrogen peroxide H(1)O(2), KCl, NaCl, ZnCl(2), AgSO(4), CdCl(2), FeCl(3), PMSF, Pepstatin A and EDTA. Repressed moderately by many organic solvents such as diethyl ether, ethy lacetate, acetophenone, butanol, trichloroethylene, tetrahydrofuran, methanol, chloroform and dichloromethane, and, to a lesser extent, by propanol, benzyl alcohol and chlorobenzene. Functionally, cysteine protease inducing milk clotting by cleaving casein. Exhibits biomedical activities such as wound healing, haemostatic and antibacterial activity, as well as agricultural application in biocontrol process against the infectious management of the root knot nematode Meloidogyne incognita. This is Cysteine protease Nivulian-2 from Euphorbia nivulia (Leafy milk hedge).